The primary structure comprises 480 residues: 2-phosphoxylose phosphatase 1 (480 aa).

Residues 1–6 (MLFRNR) are Cytoplasmic-facing. A helical; Signal-anchor for type II membrane protein membrane pass occupies residues 7–27 (FLLLLALAALLAFVSLSLQFF). At 28 to 480 (HLIPVSTPKN…YYDACHREGF (453 aa)) the chain is on the lumenal side. Catalysis depends on H97, which acts as the Nucleophile. 2 N-linked (GlcNAc...) asparagine glycosylation sites follow: N305 and N354. Catalysis depends on D379, which acts as the Proton donor.

The protein belongs to the histidine acid phosphatase family. As to quaternary structure, interacts with B3GAT3; the interaction increases the 2-phosphoxylose phosphatase activity of PXYLP1 during completion of linkage region formation in a B3GAT3-mediated manner. In terms of tissue distribution, widely expressed. Strongly expressed in spleen, fetal liver, moderately in placenta, pancreas, kidney, thymus and colon.

Its subcellular location is the golgi apparatus membrane. It carries out the reaction 3-O-[beta-D-GlcA-(1-&gt;3)-beta-D-Gal-(1-&gt;3)-beta-D-Gal-(1-&gt;4)-beta-D-2-O-P-Xyl]-L-seryl-[protein] + H2O = 3-O-(beta-D-GlcA-(1-&gt;3)-beta-D-Gal-(1-&gt;3)-beta-D-Gal-(1-&gt;4)-beta-D-Xyl)-L-seryl-[protein] + phosphate. Its function is as follows. Responsible for the 2-O-dephosphorylation of xylose in the glycosaminoglycan-protein linkage region of proteoglycans thereby regulating the amount of mature glycosaminoglycan (GAG) chains. Sulfated glycosaminoglycans (GAGs), including heparan sulfate and chondroitin sulfate, are synthesized on the so-called common GAG-protein linkage region (GlcUAbeta1-3Galbeta1-3Galbeta1-4Xylbeta1-O-Ser) of core proteins, which is formed by the stepwise addition of monosaccharide residues by the respective specific glycosyltransferases. Xylose 2-O-dephosphorylation during completion of linkage region formation is a prerequisite for the initiation and efficient elongation of the repeating disaccharide region of GAG chains. The protein is 2-phosphoxylose phosphatase 1 of Homo sapiens (Human).